We begin with the raw amino-acid sequence, 131 residues long: Protein yippee-like PJ691.02 (131 aa).

Residues 12-109 (RCYVCAKCKT…LEMQDAVLQR (98 aa)) form the Yippee domain. Zn(2+) is bound by residues C16, C19, C72, and C75.

Belongs to the yippee family.

In Schizosaccharomyces pombe (strain 972 / ATCC 24843) (Fission yeast), this protein is Protein yippee-like PJ691.02.